The chain runs to 1355 residues: Collagen alpha-2(I) chain (1355 aa).

Positions 1 to 22 (MLSFVDLRSVLLLAVTLYLVTC) are cleaved as a signal peptide. The residue at position 23 (Gln23) is a Pyrrolidone carboxylic acid. Residues 23–71 (QEVRRGPRGDKGPPGEQGPPGIPGRDGEDGLPGLPGPPGVPGLGGNFAA) constitute a propeptide, N-terminal propeptide. The segment covering 26–35 (RRGPRGDKGP) has biased composition (basic and acidic residues). Residues 26 to 1111 (RRGPRGDKGP…GDGGEYYRAD (1086 aa)) form a disordered region. The residue at position 72 (Gln72) is a Pyrrolidone carboxylic acid. Lys77 carries the post-translational modification Allysine. The span at 99–108 (PGSQGFQGLP) shows a compositional bias: low complexity. The segment covering 132-146 (AGEDGHPGKSGRPGE) has biased composition (basic and acidic residues). Lys168 is subject to 5-hydroxylysine; alternate. A glycan (O-linked (Gal...) hydroxylysine; alternate) is linked at Lys168. The span at 218-267 (PAGSAGSRGSDGSSGPVGPAGPIGSAGAPGLPGAPGAKGELGPAGNNGPT) shows a compositional bias: low complexity. Residues 276–290 (PGPPGSLGPAGPPGN) are compositionally biased toward pro residues. A compositionally biased stretch (low complexity) spans 291–303 (PGTNGVNGAKGTA). The segment covering 304–322 (GLPGVGGAPGLPGGRGIPG) has biased composition (gly residues). Over residues 327–336 (AGPSGARGLA) the composition is skewed to low complexity. 2 stretches are compositionally biased toward gly residues: residues 340–349 (GIAGGKGDTG) and 403–412 (GRAGGIGPAG). Low complexity-rich tracts occupy residues 413 to 426 (SRGSSGPPGARGPN) and 465 to 495 (EGRSGAAGPAGARGEPGAIGFPGPKGPNGEP). Composition is skewed to gly residues over residues 523–532 (GPAGLGGATG) and 586–595 (GESGGAGPHG). Residues 596–618 (PSGSRGPSGAPGPDGQKGEPGAA) are compositionally biased toward low complexity. A compositionally biased stretch (gly residues) spans 619 to 628 (GLNGGLGPSG). 3 stretches are compositionally biased toward low complexity: residues 659–675 (NPGRDGARGPAGAAGAP), 687–701 (SGPAGPSGVAGPRGA), and 708–726 (AGPAGPTGFAGPPGAAGHT). Positions 728-738 (AKGDRGAKGPK) are enriched in basic and acidic residues. 2 stretches are compositionally biased toward low complexity: residues 741–767 (AGSPGPLGAHGSAGPAGPNGPAGSTGA) and 776–788 (ATGFPGPAGRAGA). Over residues 804–813 (PGKDGSRGPR) the composition is skewed to basic and acidic residues. The span at 852–869 (AGPSGVLGARGILGLPGT) shows a compositional bias: low complexity. Residues 874–883 (GLPGGPGSNG) show a composition bias toward gly residues. Composition is skewed to low complexity over residues 884–912 (EPGPSGLAGSSGPRGPPGSVGSPGPVGHS) and 947–966 (PSGLAGAPGPAGSAGPAGKS). A compositionally biased stretch (gly residues) spans 967 to 976 (GNRGEGGPSG). Residues 996–1014 (RGDKGEAGERGARGLDGRK) are compositionally biased toward basic and acidic residues. Low complexity predominate over residues 1019-1041 (LSGLPGPSGTPGETGPSGSVGPV). The span at 1080-1091 (AGPPGPPGPPGH) shows a compositional bias: pro residues. The segment covering 1093–1105 (GPSGGGYDGGDGG) has biased composition (gly residues). The propeptide at 1111–1355 (DQPERKPKDY…GFEIGPVCFK (245 aa)) is C-terminal propeptide. Residues 1120-1355 (YEVDATLKSL…GFEIGPVCFK (236 aa)) enclose the Fibrillar collagen NC1 domain. Cystine bridges form between Cys1150–Cys1182, Cys1190–Cys1353, and Cys1261–Cys1306. Ca(2+) contacts are provided by Asp1168, Asn1170, Gln1171, Cys1173, and Asp1176. N-linked (GlcNAc...) asparagine glycosylation is found at Asn1206 and Asn1256.

This sequence belongs to the fibrillar collagen family. As to quaternary structure, trimers of one alpha 2(I) and two alpha 1(I) chains. Prolines at the third position of the tripeptide repeating unit (G-X-Y) are hydroxylated in some or all of the chains. In terms of tissue distribution, forms the fibrils of tendon, ligaments and bones. In bones the fibrils are mineralized with calcium hydroxyapatite.

It is found in the secreted. Its subcellular location is the extracellular space. It localises to the extracellular matrix. Type I collagen is a member of group I collagen (fibrillar forming collagen). This is Collagen alpha-2(I) chain (COL1A2) from Aquarana catesbeiana (American bullfrog).